We begin with the raw amino-acid sequence, 1058 residues long: Carbamoyl phosphate synthase large chain (1058 aa).

The interval 1 to 401 (MPKRTDIKKI…SLLKACRSLE (401 aa)) is carboxyphosphate synthetic domain. ATP contacts are provided by Arg129, Arg169, Gly175, Gly176, Lys208, Ile210, Glu215, Gly241, Ile242, His243, Gln284, and Glu298. The ATP-grasp 1 domain occupies 133-327 (KALMKALKQP…IAKIAAKIAI (195 aa)). Gln284, Glu298, and Asn300 together coordinate Mg(2+). The Mn(2+) site is built by Gln284, Glu298, and Asn300. The segment at 402–546 (IGIYHNECKE…YSTYAFENES (145 aa)) is oligomerization domain. Residues 547–929 (QASPNKSILV…ALYKAFEASY (383 aa)) form a carbamoyl phosphate synthetic domain region. The ATP-grasp 2 domain maps to 671-861 (EKALHDINIP…MAQVATKLIL (191 aa)). Positions 707, 746, 748, 752, 777, 778, 779, 780, 820, and 832 each coordinate ATP. The Mg(2+) site is built by Gln820, Glu832, and Asn834. Mn(2+) contacts are provided by Gln820, Glu832, and Asn834. The MGS-like domain maps to 930–1058 (MHVPDFGNII…ESRSFSIQSL (129 aa)). Residues 930-1058 (MHVPDFGNII…ESRSFSIQSL (129 aa)) are allosteric domain.

This sequence belongs to the CarB family. Composed of two chains; the small (or glutamine) chain promotes the hydrolysis of glutamine to ammonia, which is used by the large (or ammonia) chain to synthesize carbamoyl phosphate. Tetramer of heterodimers (alpha,beta)4. Requires Mg(2+) as cofactor. It depends on Mn(2+) as a cofactor.

The enzyme catalyses hydrogencarbonate + L-glutamine + 2 ATP + H2O = carbamoyl phosphate + L-glutamate + 2 ADP + phosphate + 2 H(+). The catalysed reaction is hydrogencarbonate + NH4(+) + 2 ATP = carbamoyl phosphate + 2 ADP + phosphate + 2 H(+). The protein operates within amino-acid biosynthesis; L-arginine biosynthesis; carbamoyl phosphate from bicarbonate: step 1/1. It functions in the pathway pyrimidine metabolism; UMP biosynthesis via de novo pathway; (S)-dihydroorotate from bicarbonate: step 1/3. Its function is as follows. Large subunit of the glutamine-dependent carbamoyl phosphate synthetase (CPSase). CPSase catalyzes the formation of carbamoyl phosphate from the ammonia moiety of glutamine, carbonate, and phosphate donated by ATP, constituting the first step of 2 biosynthetic pathways, one leading to arginine and/or urea and the other to pyrimidine nucleotides. The large subunit (synthetase) binds the substrates ammonia (free or transferred from glutamine from the small subunit), hydrogencarbonate and ATP and carries out an ATP-coupled ligase reaction, activating hydrogencarbonate by forming carboxy phosphate which reacts with ammonia to form carbamoyl phosphate. The sequence is that of Carbamoyl phosphate synthase large chain from Streptococcus uberis (strain ATCC BAA-854 / 0140J).